The following is a 599-amino-acid chain: Protein ref(2)P (599 aa).

Positions 3–88 constitute a PB1 domain; sequence EKLLKITYQG…CESNMHVQVA (86 aa). Residues 122-173 form a ZZ-type zinc finger; that stretch reads HDSVQCDGCGLAPLIGFRYKCVQCSNFDLCQKCESAHKHPEHLMLRMPTNNG. Cys-127, Cys-130, Cys-142, Cys-145, Cys-151, Cys-154, His-160, and His-163 together coordinate Zn(2+). 4 disordered regions span residues 192 to 225, 245 to 319, 357 to 453, and 507 to 544; these read RRSR…HARR, TTAT…INLD, GIFA…LDPE, and ASAN…DDKR. Residues 199 to 211 show a composition bias toward low complexity; sequence PFQEASQPAPAAE. The span at 276 to 286 shows a compositional bias: basic and acidic residues; the sequence is KATESEAKPTE. The segment covering 291-319 has biased composition (polar residues); it reads NTDQSVPTTEDPVTTPRSTEPTTPVINLD. The segment covering 375–411 has biased composition (low complexity); that stretch reads QSQSSGQSAASSASQSAVPSAAPSANQSNVPSANQSA. 3 repeat units span residues 386–393, 399–406, and 407–413. Positions 386–413 are 3 X 8 AA repeats of S-A-N-Q-S-X-X-P; sequence SASQSAVPSAAPSANQSNVPSANQSATP. A compositionally biased stretch (polar residues) spans 412–423; sequence TPSISGSISDAQ. Positions 511–536 are enriched in low complexity; sequence TQTAQVDTVSTSTSTTSVTTNSVGTS. In terms of domain architecture, UBA spans 550 to 595; it reads HTDERINQSIHAMMAMGFSNEGAWLTQLLESVQGNIPAALDVMHVS.

In terms of assembly, interacts with aPKC and Traf6.

It is found in the nucleus. The protein localises to the cytoplasm. Functionally, required for selective autophagy activation by ubiquitinated proteins. Implicated in sigma rhabdovirus multiplication and necessary for male fertility. Involved in activating transcription of Drs. The polypeptide is Protein ref(2)P (ref(2)P) (Drosophila simulans (Fruit fly)).